We begin with the raw amino-acid sequence, 258 residues long: MKQLYWYTCGEGDCDLVLLHGWGLNSGVWHCIIDRLAPHFRLHLVDLPGYGRSQDYGAMSLADMAERVAQQAPKQALWLGWSMGGLVASQIALSQPECVRGLITVSSSPCFTARDEWPGIKPEVLAGFQHQLSDDFHRTVERFLALQTLGTESSRQDARLLKSVVLQHQMPDVEVLTGGLAILRTADLRTALAGFTLPFMRVYGHLDSLVPRKVASLLDSAWPQTQSVVMQGAAHAPFISHPNDFAKLILNFAEENKK.

The AB hydrolase-1 domain occupies 16-242 (LVLLHGWGLN…AAHAPFISHP (227 aa)). Substrate is bound by residues W22, 82-83 (SM), and 143-147 (FLALQ). The active-site Nucleophile is S82. Catalysis depends on residues D207 and H235. Position 235 (H235) interacts with substrate.

Belongs to the AB hydrolase superfamily. Carboxylesterase BioH family. In terms of assembly, monomer.

Its subcellular location is the cytoplasm. It carries out the reaction 6-carboxyhexanoyl-[ACP] methyl ester + H2O = 6-carboxyhexanoyl-[ACP] + methanol + H(+). It participates in cofactor biosynthesis; biotin biosynthesis. Its function is as follows. The physiological role of BioH is to remove the methyl group introduced by BioC when the pimeloyl moiety is complete. It allows to synthesize pimeloyl-ACP via the fatty acid synthetic pathway through the hydrolysis of the ester bonds of pimeloyl-ACP esters. The protein is Pimeloyl-[acyl-carrier protein] methyl ester esterase of Yersinia pseudotuberculosis serotype O:1b (strain IP 31758).